The following is a 362-amino-acid chain: Peptide chain release factor 1 (362 aa).

Position 238 is an N5-methylglutamine (glutamine 238).

Belongs to the prokaryotic/mitochondrial release factor family. Post-translationally, methylated by PrmC. Methylation increases the termination efficiency of RF1.

Its subcellular location is the cytoplasm. Peptide chain release factor 1 directs the termination of translation in response to the peptide chain termination codons UAG and UAA. The protein is Peptide chain release factor 1 of Psychrobacter arcticus (strain DSM 17307 / VKM B-2377 / 273-4).